The following is a 220-amino-acid chain: Protein GrpE (220 aa).

The interval 1–55 (MCGGDVQGQGVASGCDEALERADSLRASDPVPVESGEGSVPGEHSQELETGASEE) is disordered.

The protein belongs to the GrpE family. Homodimer.

It is found in the cytoplasm. Its function is as follows. Participates actively in the response to hyperosmotic and heat shock by preventing the aggregation of stress-denatured proteins, in association with DnaK and GrpE. It is the nucleotide exchange factor for DnaK and may function as a thermosensor. Unfolded proteins bind initially to DnaJ; upon interaction with the DnaJ-bound protein, DnaK hydrolyzes its bound ATP, resulting in the formation of a stable complex. GrpE releases ADP from DnaK; ATP binding to DnaK triggers the release of the substrate protein, thus completing the reaction cycle. Several rounds of ATP-dependent interactions between DnaJ, DnaK and GrpE are required for fully efficient folding. The sequence is that of Protein GrpE from Treponema pallidum (strain Nichols).